The chain runs to 447 residues: UDP-N-acetylmuramoyl-L-alanyl-D-glutamate--2,6-diaminopimelate ligase (447 aa).

Thr21 is a UDP-N-acetyl-alpha-D-muramoyl-L-alanyl-D-glutamate binding site. Position 74 to 80 (74 to 80 (GTNGKTT)) interacts with ATP. Residues 117–118 (TT), Ser144, Gln150, and Arg152 each bind UDP-N-acetyl-alpha-D-muramoyl-L-alanyl-D-glutamate. Lys184 carries the post-translational modification N6-carboxylysine. Meso-2,6-diaminopimelate is bound by residues Arg340, 364–367 (DNPR), Gly415, and Glu419. Positions 364–367 (DNPR) match the Meso-diaminopimelate recognition motif motif.

Belongs to the MurCDEF family. MurE subfamily. Mg(2+) is required as a cofactor. In terms of processing, carboxylation is probably crucial for Mg(2+) binding and, consequently, for the gamma-phosphate positioning of ATP.

It is found in the cytoplasm. The enzyme catalyses UDP-N-acetyl-alpha-D-muramoyl-L-alanyl-D-glutamate + meso-2,6-diaminopimelate + ATP = UDP-N-acetyl-alpha-D-muramoyl-L-alanyl-gamma-D-glutamyl-meso-2,6-diaminopimelate + ADP + phosphate + H(+). It functions in the pathway cell wall biogenesis; peptidoglycan biosynthesis. Catalyzes the addition of meso-diaminopimelic acid to the nucleotide precursor UDP-N-acetylmuramoyl-L-alanyl-D-glutamate (UMAG) in the biosynthesis of bacterial cell-wall peptidoglycan. In Helicobacter pylori (strain J99 / ATCC 700824) (Campylobacter pylori J99), this protein is UDP-N-acetylmuramoyl-L-alanyl-D-glutamate--2,6-diaminopimelate ligase.